The primary structure comprises 316 residues: 4-hydroxy-3-methylbut-2-enyl diphosphate reductase (316 aa).

Cys-12 provides a ligand contact to [4Fe-4S] cluster. (2E)-4-hydroxy-3-methylbut-2-enyl diphosphate-binding residues include His-41 and His-74. Residues His-41 and His-74 each coordinate dimethylallyl diphosphate. 2 residues coordinate isopentenyl diphosphate: His-41 and His-74. A [4Fe-4S] cluster-binding site is contributed by Cys-96. Residue His-124 participates in (2E)-4-hydroxy-3-methylbut-2-enyl diphosphate binding. His-124 serves as a coordination point for dimethylallyl diphosphate. His-124 is an isopentenyl diphosphate binding site. The active-site Proton donor is the Glu-126. Thr-167 provides a ligand contact to (2E)-4-hydroxy-3-methylbut-2-enyl diphosphate. Cys-197 provides a ligand contact to [4Fe-4S] cluster. Residues Ser-225, Ser-226, Asn-227, and Ser-269 each contribute to the (2E)-4-hydroxy-3-methylbut-2-enyl diphosphate site. The dimethylallyl diphosphate site is built by Ser-225, Ser-226, Asn-227, and Ser-269. Positions 225, 226, 227, and 269 each coordinate isopentenyl diphosphate.

The protein belongs to the IspH family. Homodimer. Requires [4Fe-4S] cluster as cofactor.

It carries out the reaction isopentenyl diphosphate + 2 oxidized [2Fe-2S]-[ferredoxin] + H2O = (2E)-4-hydroxy-3-methylbut-2-enyl diphosphate + 2 reduced [2Fe-2S]-[ferredoxin] + 2 H(+). It catalyses the reaction dimethylallyl diphosphate + 2 oxidized [2Fe-2S]-[ferredoxin] + H2O = (2E)-4-hydroxy-3-methylbut-2-enyl diphosphate + 2 reduced [2Fe-2S]-[ferredoxin] + 2 H(+). It functions in the pathway isoprenoid biosynthesis; dimethylallyl diphosphate biosynthesis; dimethylallyl diphosphate from (2E)-4-hydroxy-3-methylbutenyl diphosphate: step 1/1. The protein operates within isoprenoid biosynthesis; isopentenyl diphosphate biosynthesis via DXP pathway; isopentenyl diphosphate from 1-deoxy-D-xylulose 5-phosphate: step 6/6. Catalyzes the conversion of 1-hydroxy-2-methyl-2-(E)-butenyl 4-diphosphate (HMBPP) into a mixture of isopentenyl diphosphate (IPP) and dimethylallyl diphosphate (DMAPP). Acts in the terminal step of the DOXP/MEP pathway for isoprenoid precursor biosynthesis. This chain is 4-hydroxy-3-methylbut-2-enyl diphosphate reductase, found in Pectobacterium atrosepticum (strain SCRI 1043 / ATCC BAA-672) (Erwinia carotovora subsp. atroseptica).